We begin with the raw amino-acid sequence, 144 residues long: Glycine-rich protein DC9.1 (144 aa).

The helical transmembrane segment at 5–25 (IFLLLGLSIAFAILISSEVAA) threads the bilayer. 11 consecutive repeat copies span residues 37-42 (GYNNGG), 43-48 (GYHNGG), 50-55 (GYNNGG), 56-61 (GYHNGG), 63-68 (GYNNGG), 69-74 (GYHNGG), 76-81 (GYNNGG), 82-87 (GYHNGG), 89-94 (GYNNGG), 102-107 (GYNNGG), and 108-113 (GHHGGG). The 11 X 6 AA tandem repeats of G-Y-[NH]-N-G -G stretch occupies residues 37–113 (GYNNGGGYHN…NNGGGHHGGG (77 aa)).

Belongs to the GRP family.

The protein resides in the membrane. The polypeptide is Glycine-rich protein DC9.1 (Daucus carota (Wild carrot)).